The following is a 516-amino-acid chain: Prolyl 4-hydroxylase subunit alpha-1 (516 aa).

Residue asparagine 97 is glycosylated (N-linked (GlcNAc...) asparagine). The stretch at 189 to 222 (VYILDYLSYAVYQQGDLSKAMMLTKRLLELDPEH) is one TPR repeat. Asparagine 243 carries an N-linked (GlcNAc...) asparagine glycan. The Fe2OG dioxygenase domain maps to 393–501 (TAEELQVANY…KWVSNKWLHE (109 aa)). The Fe cation site is built by histidine 411, aspartate 413, and histidine 482. 2-oxoglutarate is bound at residue lysine 492.

This sequence belongs to the P4HA family. In terms of assembly, heterotetramer of two alpha chains and two beta chains (the beta chain is the multi-functional PDI). Requires Fe(2+) as cofactor. L-ascorbate serves as cofactor.

The protein localises to the endoplasmic reticulum lumen. It catalyses the reaction L-prolyl-[collagen] + 2-oxoglutarate + O2 = trans-4-hydroxy-L-prolyl-[collagen] + succinate + CO2. Its function is as follows. Catalyzes the post-translational formation of 4-hydroxyproline in -Xaa-Pro-Gly- sequences in collagens and other proteins. This is Prolyl 4-hydroxylase subunit alpha-1 (P4HA1) from Gallus gallus (Chicken).